Reading from the N-terminus, the 205-residue chain is SREBP regulating gene protein (205 aa).

The Cytoplasmic portion of the chain corresponds to Met1–Arg16. The helical transmembrane segment at Trp17–Phe35 threads the bilayer. Residues Lys36–Ile205 lie on the Lumenal side of the membrane. The N-linked (GlcNAc...) asparagine glycan is linked to Asn67.

It belongs to the SPRING family.

The protein resides in the golgi apparatus membrane. In terms of biological role, positively regulates hepatic SREBP signaling pathway by modulating the proper localization of SCAP (SREBP cleavage-activating protein) to the endoplasmic reticulum, thereby controlling the level of functional SCAP. This chain is SREBP regulating gene protein, found in Xenopus laevis (African clawed frog).